Here is a 143-residue protein sequence, read N- to C-terminus: Ribonuclease HI (143 aa).

In terms of domain architecture, RNase H type-1 spans 1–136; it reads MQEIEIFCDG…CNSLAKLEAQ (136 aa). Residues D9, E47, D69, and N128 each contribute to the Mg(2+) site.

It belongs to the RNase H family. As to quaternary structure, monomer. Mg(2+) is required as a cofactor.

The protein resides in the cytoplasm. It carries out the reaction Endonucleolytic cleavage to 5'-phosphomonoester.. Functionally, endonuclease that specifically degrades the RNA of RNA-DNA hybrids. The chain is Ribonuclease HI (rnhA) from Helicobacter pylori (strain J99 / ATCC 700824) (Campylobacter pylori J99).